The following is a 247-amino-acid chain: Small ribosomal subunit protein uS2 (247 aa).

It belongs to the universal ribosomal protein uS2 family.

This chain is Small ribosomal subunit protein uS2, found in Fusobacterium nucleatum subsp. nucleatum (strain ATCC 25586 / DSM 15643 / BCRC 10681 / CIP 101130 / JCM 8532 / KCTC 2640 / LMG 13131 / VPI 4355).